The primary structure comprises 195 residues: 3-isopropylmalate dehydratase small subunit (195 aa).

It belongs to the LeuD family. LeuD type 1 subfamily. Heterodimer of LeuC and LeuD.

The catalysed reaction is (2R,3S)-3-isopropylmalate = (2S)-2-isopropylmalate. The protein operates within amino-acid biosynthesis; L-leucine biosynthesis; L-leucine from 3-methyl-2-oxobutanoate: step 2/4. In terms of biological role, catalyzes the isomerization between 2-isopropylmalate and 3-isopropylmalate, via the formation of 2-isopropylmaleate. This chain is 3-isopropylmalate dehydratase small subunit, found in Koribacter versatilis (strain Ellin345).